Here is a 1209-residue protein sequence, read N- to C-terminus: Calcium-activated potassium channel subunit alpha-1 (1209 aa).

A compositionally biased stretch (gly residues) spans 1–26 (MANGGGGGGGGSSGSSGGGGGGGGGE). 2 disordered regions span residues 1–29 (MANG…ETAL) and 42–64 (LDAS…SVHE). Residues 1–87 (MANGGGGGGG…VPCDSRGQRM (87 aa)) lie on the Extracellular side of the membrane. A compositionally biased stretch (low complexity) spans 45–61 (SSSSSSSSSSSSSSSSS). A helical transmembrane segment spans residues 88–108 (WWAFLASSMVTFFGGLFIILL). Residues 109–179 (WRTLKYLWTV…MISAQTLTGR (71 aa)) lie on the Cytoplasmic side of the membrane. S-palmitoyl cysteine attachment occurs at residues C119, C120, and C122. The chain crosses the membrane as a helical span at residues 180 to 200 (VLVVLVFALSIGALVIYFIDS). The Extracellular portion of the chain corresponds to 201–215 (SNPIESCQNFYKDFT). The chain crosses the membrane as a helical span at residues 216 to 236 (LQIDMAFNVFFLLYFGLRFIA). Residues 237–240 (ANDK) are Cytoplasmic-facing. The chain crosses the membrane as a helical span at residues 241–261 (LWFWLEVNSVVDFFTVPPVFV). At 262–265 (SVYL) the chain is on the extracellular side. The chain crosses the membrane as a helical; Voltage-sensor span at residues 266 to 286 (NRSWLGLRFLRALRLIQFSEI). Residues 287 to 301 (LQFLNILKTSNSIKL) lie on the Cytoplasmic side of the membrane. Residues 302 to 322 (VNLLSIFISTWLTAAGFIHLV) traverse the membrane as a helical segment. Over 323–336 (ENSGDPWENFQNNQ) the chain is Extracellular. The pore-forming intramembrane region spans 337–359 (ALTYWECVYLLMVTMSTVGYGDV). The Selectivity for potassium motif lies at 353–356 (TVGY). Residues 360–368 (YAKTTLGRL) lie on the Extracellular side of the membrane. A helical transmembrane segment spans residues 369-389 (FMVFFILGGLAMFASYVPEII). At 390–1209 (ELIGNRKKYG…DKQKKEMVYR (820 aa)) the chain is on the cytoplasmic side. In terms of domain architecture, RCK N-terminal 1 spans 408 to 550 (RKHIVVCGHI…WNWKEGDDAI (143 aa)). Mg(2+)-binding residues include E440, Q463, and E465. Residues 557–577 (LGFIAQSCLAQGLSTMLANLF) form a segment S7 region. The tract at residues 614–634 (LSFPTVCELCFVKLKLLMIAI) is segment S8. The tract at residues 682 to 686 (CKACH) is heme-binding motif. The segment at 704-734 (EDEQPPTLSPKKKQRNGGMRNSPNTSPKLMR) is disordered. T710 carries the phosphothreonine modification. Phosphoserine is present on residues S712, S725, and S729. The interval 784–804 (VLSGHVVVCIFGDVSSALIGL) is segment S9. One can recognise an RCK N-terminal 2 domain in the interval 786 to 930 (SGHVVVCIFG…MDRSSPDNSP (145 aa)). Residue T917 is modified to Phosphothreonine. 2 positions are modified to phosphoserine: S925 and S929. Positions 977-999 (TELVNDTNVQFLDQDDDDDPDTE) match the Calcium bowl motif. Q986, D989, D992, and D994 together coordinate Ca(2+). A segment S10 region spans residues 1006–1026 (FACGTAFAVSVLDSLMSATYF). A compositionally biased stretch (low complexity) spans 1160–1185 (RASLSHSSHSSQSSSKKSSSVHSIPS). The segment at 1160-1209 (RASLSHSSHSSQSSSKKSSSVHSIPSTANRPNRPKSRESRDKQKKEMVYR) is disordered. The span at 1194–1209 (KSRESRDKQKKEMVYR) shows a compositional bias: basic and acidic residues. Residues S1195 and S1198 each carry the phosphoserine modification.

Belongs to the potassium channel family. Calcium-activated (TC 1.A.1.3) subfamily. KCa1.1/KCNMA1 sub-subfamily. In terms of assembly, homotetramer; which constitutes the calcium-activated potassium channel. Interacts with beta subunits KCNMB1, KCNMB2, KCNMB3 and KCNMB4. Interacts with gamma subunits LRRC26, LRRC38, LRRC52 and LRRC55. Beta and gamma subunits are accessory, and modulate its activity. Interacts with RAB11B. Post-translationally, phosphorylated. Phosphorylation by kinases such as PKA and/or PKG. In smooth muscles, phosphorylation affects its activity. In terms of processing, palmitoylation by ZDHHC22 and ZDHHC23 within the intracellular linker between the S0 and S1 transmembrane domains regulates localization to the plasma membrane. Depalmitoylated by LYPLA1 and LYPLAL1, leading to retard exit from the trans-Golgi network.

Its subcellular location is the cell membrane. It localises to the endoplasmic reticulum membrane. The catalysed reaction is K(+)(in) = K(+)(out). Its activity is regulated as follows. Ethanol and carbon monoxide-bound heme increase channel activation. With respect to regulation, heme inhibits channel activation. Functionally, potassium channel activated by both membrane depolarization or increase in cytosolic Ca(2+) that mediates export of K(+). It is also activated by the concentration of cytosolic Mg(2+). Its activation dampens the excitatory events that elevate the cytosolic Ca(2+) concentration and/or depolarize the cell membrane. It therefore contributes to repolarization of the membrane potential. Plays a key role in controlling excitability in a number of systems, such as regulation of the contraction of smooth muscle, the tuning of hair cells in the cochlea, regulation of transmitter release, and innate immunity. In smooth muscles, its activation by high level of Ca(2+), caused by ryanodine receptors in the sarcoplasmic reticulum, regulates the membrane potential. In cochlea cells, its number and kinetic properties partly determine the characteristic frequency of each hair cell and thereby helps to establish a tonotopic map. Kinetics of KCNMA1 channels are determined by alternative splicing, phosphorylation status and its combination with modulating beta subunits. Highly sensitive to both iberiotoxin (IbTx) and charybdotoxin (CTX). Its function is as follows. Potassium channel activated by both membrane depolarization or increase in cytosolic Ca(2+) that mediates export of K(+). The polypeptide is Calcium-activated potassium channel subunit alpha-1 (Kcnma1) (Rattus norvegicus (Rat)).